We begin with the raw amino-acid sequence, 76 residues long: Acyl carrier protein (76 aa).

In terms of domain architecture, Carrier spans 1–76 (MAIFDDIKEV…DVVRYIETNK (76 aa)). Residue S36 is modified to O-(pantetheine 4'-phosphoryl)serine.

Belongs to the acyl carrier protein (ACP) family. In terms of processing, 4'-phosphopantetheine is transferred from CoA to a specific serine of apo-ACP by AcpS. This modification is essential for activity because fatty acids are bound in thioester linkage to the sulfhydryl of the prosthetic group.

It is found in the cytoplasm. It functions in the pathway lipid metabolism; fatty acid biosynthesis. Carrier of the growing fatty acid chain in fatty acid biosynthesis. The sequence is that of Acyl carrier protein from Wolinella succinogenes (strain ATCC 29543 / DSM 1740 / CCUG 13145 / JCM 31913 / LMG 7466 / NCTC 11488 / FDC 602W) (Vibrio succinogenes).